A 132-amino-acid chain; its full sequence is Translation initiation factor 5A (132 aa).

Lysine 36 is modified (hypusine).

This sequence belongs to the eIF-5A family.

Its subcellular location is the cytoplasm. Functionally, functions by promoting the formation of the first peptide bond. The protein is Translation initiation factor 5A (eIF5A) of Thermofilum pendens (strain DSM 2475 / Hrk 5).